The sequence spans 393 residues: Lipoyl synthase, mitochondrial (393 aa).

Residues C111, C116, C122, C142, C146, C149, and S357 each contribute to the [4Fe-4S] cluster site. Positions 127–346 (EHGTQTATIM…ETRGNELGFL (220 aa)) constitute a Radical SAM core domain.

The protein belongs to the radical SAM superfamily. Lipoyl synthase family. [4Fe-4S] cluster serves as cofactor.

It localises to the mitochondrion. It catalyses the reaction [[Fe-S] cluster scaffold protein carrying a second [4Fe-4S](2+) cluster] + N(6)-octanoyl-L-lysyl-[protein] + 2 oxidized [2Fe-2S]-[ferredoxin] + 2 S-adenosyl-L-methionine + 4 H(+) = [[Fe-S] cluster scaffold protein] + N(6)-[(R)-dihydrolipoyl]-L-lysyl-[protein] + 4 Fe(3+) + 2 hydrogen sulfide + 2 5'-deoxyadenosine + 2 L-methionine + 2 reduced [2Fe-2S]-[ferredoxin]. It participates in protein modification; protein lipoylation via endogenous pathway; protein N(6)-(lipoyl)lysine from octanoyl-[acyl-carrier-protein]: step 2/2. Functionally, catalyzes the radical-mediated insertion of two sulfur atoms into the C-6 and C-8 positions of the octanoyl moiety bound to the lipoyl domains of lipoate-dependent enzymes, thereby converting the octanoylated domains into lipoylated derivatives. The chain is Lipoyl synthase, mitochondrial from Aedes aegypti (Yellowfever mosquito).